A 305-amino-acid polypeptide reads, in one-letter code: NAD kinase (305 aa).

The active-site Proton acceptor is the D76. NAD(+)-binding positions include 76–77 (DG), 150–151 (ND), R161, and D180.

Belongs to the NAD kinase family. A divalent metal cation serves as cofactor.

The protein resides in the cytoplasm. It carries out the reaction NAD(+) + ATP = ADP + NADP(+) + H(+). Its function is as follows. Involved in the regulation of the intracellular balance of NAD and NADP, and is a key enzyme in the biosynthesis of NADP. Catalyzes specifically the phosphorylation on 2'-hydroxyl of the adenosine moiety of NAD to yield NADP. The sequence is that of NAD kinase from Treponema pallidum (strain Nichols).